A 233-amino-acid polypeptide reads, in one-letter code: Sugar fermentation stimulation protein homolog (233 aa).

The protein belongs to the SfsA family.

The sequence is that of Sugar fermentation stimulation protein homolog from Chelativorans sp. (strain BNC1).